A 449-amino-acid polypeptide reads, in one-letter code: UDP-N-acetylmuramoylalanine--D-glutamate ligase (449 aa).

111–117 (GTNGKST) is an ATP binding site.

Belongs to the MurCDEF family.

Its subcellular location is the cytoplasm. It carries out the reaction UDP-N-acetyl-alpha-D-muramoyl-L-alanine + D-glutamate + ATP = UDP-N-acetyl-alpha-D-muramoyl-L-alanyl-D-glutamate + ADP + phosphate + H(+). It functions in the pathway cell wall biogenesis; peptidoglycan biosynthesis. Cell wall formation. Catalyzes the addition of glutamate to the nucleotide precursor UDP-N-acetylmuramoyl-L-alanine (UMA). In Rickettsia felis (strain ATCC VR-1525 / URRWXCal2) (Rickettsia azadi), this protein is UDP-N-acetylmuramoylalanine--D-glutamate ligase.